The sequence spans 145 residues: Ribosome maturation factor RimP (145 aa).

This sequence belongs to the RimP family.

It localises to the cytoplasm. Required for maturation of 30S ribosomal subunits. This is Ribosome maturation factor RimP from Borreliella burgdorferi (strain ZS7) (Borrelia burgdorferi).